Reading from the N-terminus, the 340-residue chain is Mitochondrial amidoxime-reducing component 1 (340 aa).

The N-myristoyl glycine moiety is linked to residue Gly2. The Mitochondrial matrix segment spans residues 2 to 24 (GAGSWALTLFGFSAFRVPGQPRS). The helical; Signal-anchor for type II membrane protein transmembrane segment at 25 to 44 (TWLGVAALGLAAVALGTVAW) threads the bilayer. Topologically, residues 45-340 (RRARPRRRRR…VGDPVYLLGQ (296 aa)) are cytoplasmic. Residues Lys70, Ser71, and Arg95 each contribute to the Mo-molybdopterin site. The segment at 96 to 186 (FWLVINEEGN…KMQSCRLVHF (91 aa)) is MOSC N-terminal region. One can recognise an MOSC domain in the interval 191 to 338 (RPRSSRQMKA…IRVGDPVYLL (148 aa)). Residues Ser214, Arg241, Asn243, Thr274, Arg275, Cys276, and Tyr320 each contribute to the Mo-molybdopterin site.

As to quaternary structure, component of a complex composed of cytochrome b5, NADH-cytochrome b5 reductase and MTARC1. It depends on Mo-molybdopterin as a cofactor.

It localises to the mitochondrion outer membrane. Its subcellular location is the membrane. It catalyses the reaction N(omega)-hydroxy-L-arginine + 2 Fe(II)-[cytochrome b5] + 2 H(+) = L-arginine + 2 Fe(III)-[cytochrome b5] + H2O. In terms of biological role, catalyzes the reduction of N-oxygenated molecules, acting as a counterpart of cytochrome P450 and flavin-containing monooxygenases in metabolic cycles. As a component of prodrug-converting system, reduces a multitude of N-hydroxylated prodrugs particularly amidoximes, leading to increased drug bioavailability. May be involved in mitochondrial N(omega)-hydroxy-L-arginine (NOHA) reduction, regulating endogenous nitric oxide levels and biosynthesis. Postulated to cleave the N-OH bond of N-hydroxylated substrates in concert with electron transfer from NADH to cytochrome b5 reductase then to cytochrome b5, the ultimate electron donor that primes the active site for substrate reduction. This is Mitochondrial amidoxime-reducing component 1 (Mtarc1) from Mus musculus (Mouse).